Consider the following 491-residue polypeptide: UDP-N-acetylmuramate--L-alanine ligase (491 aa).

126-132 provides a ligand contact to ATP; that stretch reads GTHGKTT.

This sequence belongs to the MurCDEF family.

The protein resides in the cytoplasm. The enzyme catalyses UDP-N-acetyl-alpha-D-muramate + L-alanine + ATP = UDP-N-acetyl-alpha-D-muramoyl-L-alanine + ADP + phosphate + H(+). It functions in the pathway cell wall biogenesis; peptidoglycan biosynthesis. Its function is as follows. Cell wall formation. The protein is UDP-N-acetylmuramate--L-alanine ligase of Escherichia coli (strain SE11).